A 1161-amino-acid chain; its full sequence is Lethal(2) giant larvae protein (1161 aa).

A phospho-regulated basic and hydrophobic (PRBH) motif region spans residues 15–86 (DRHRLQKDLF…NNSASELNVQ (72 aa)). WD repeat units follow at residues 39 to 72 (SALA…LYGQ), 82 to 128 (ELNV…DGKL), 131 to 167 (VSSL…EPVI), 189 to 223 (SIRQ…QRAY), 231 to 263 (SVGL…PEPP), 278 to 320 (SINR…GHKV), 328 to 358 (VIDF…AYDL), and 380 to 464 (TCNY…YNFK). Ser-473 and Ser-484 each carry phosphoserine. 2 WD repeats span residues 513-594 (KKIA…SGVL) and 603-664 (TCMA…LRES). Ser-679 bears the Phosphoserine mark. 4 WD repeats span residues 708–778 (VRCL…KEIQ), 787–832 (GISI…LKPI), 837–927 (LTAN…LNAA), and 941–964 (CFTN…ALAT). 6 positions are modified to phosphoserine: Ser-808, Ser-869, Ser-876, Ser-887, Ser-889, and Ser-893. Ser-1013 is modified (phosphoserine). The tract at residues 1141–1161 (EKTNGDNKIGTPKTAPEESQF) is disordered.

This sequence belongs to the WD repeat L(2)GL family. As to quaternary structure, may form multimeric complexes. Interacts with mahj. Interacts with aPKC; leading to phosphorylation. Interacts with ball. Phosphorylated by aPKC which lowers lipid affinity and promotes dissociation from the cell cortex. In developing oocytes, aPKC-mediated phosphorylation restricts activity to the oocyte posterior and is required for oocyte polarity formation. In terms of tissue distribution, expressed in the epithelial cells of the digestive tract and in gonads.

The protein resides in the cytoplasm. The protein localises to the cell cortex. Functionally, essential for the development of polarized epithelia, for cell polarity associated with asymmetric cell division of neuroblasts during development, and for oocyte polarity formation. Promotes the formation of actin-rich projections at the oocyte cortex and the posterior enrichment of par-1 which is required for oocyte polarization. Regulates the localization of axis-specifying morphogens such as stau and grk. Its function is as follows. Has an essential role in control of cell proliferation and differentiation during development and could act as a tumor suppressor. Has an accessory function in control of cell proliferation and differentiation during development. The protein is Lethal(2) giant larvae protein (l(2)gl) of Drosophila melanogaster (Fruit fly).